The following is a 244-amino-acid chain: Deoxynucleotide monophosphate kinase (244 aa).

DGMP is bound at residue Lys-10. Arg-11, Gly-13, Asp-15, and Thr-16 together coordinate ATP. 13 residues coordinate dGMP: Ile-36, Lys-37, Arg-70, Arg-137, Gly-144, Thr-145, Val-149, Trp-157, Asp-180, Arg-182, Gln-183, Glu-186, and Thr-213.

This sequence belongs to the dNMP kinase family. As to quaternary structure, homodimer. It depends on Mg(2+) as a cofactor.

The enzyme catalyses dTMP + ATP = dTDP + ADP. It carries out the reaction dGMP + ATP = dGDP + ADP. The catalysed reaction is 5-hydroxymethyl-dCMP + ATP = 5-hydroxymethyl-dCDP + ADP. Allows the synthesis of deoxyribonucleoside triphosphates necessary for the rapid viral DNA replication. Phosphorylates dGMP, dTMP and 5-hydroxymethyl-dCMP (hmdCMP) while excluding dCMP and dAMP. The phosphorylation of 5-hydroxymethyl-dCMP represents the first step in the replacement of cytosine by hydroxymethylcytosine in new viral DNA genomes. The sequence is that of Deoxynucleotide monophosphate kinase (1) from Escherichia phage RB69 (Bacteriophage RB69).